The primary structure comprises 490 residues: GTPase Der (490 aa).

2 EngA-type G domains span residues 3-166 and 196-369; these read PVIA…PRDE and IKIA…KSAV. Residues 9–16, 56–60, 118–121, 202–209, 249–253, and 314–317 contribute to the GTP site; these read GRPNVGKS, DTGGI, NKID, DTAGV, and NKWD. One can recognise a KH-like domain in the interval 370 to 454; sequence TRWPTSRLTQ…PIRIEFKGGE (85 aa). Residues 452–490 form a disordered region; that stretch reads GGENPYEGNKNTLTDRQVNKKRRMMSHHKKADKKRRDKR. The span at 470–490 shows a compositional bias: basic residues; sequence NKKRRMMSHHKKADKKRRDKR.

The protein belongs to the TRAFAC class TrmE-Era-EngA-EngB-Septin-like GTPase superfamily. EngA (Der) GTPase family. Associates with the 50S ribosomal subunit.

In terms of biological role, GTPase that plays an essential role in the late steps of ribosome biogenesis. This is GTPase Der from Pseudomonas syringae pv. syringae (strain B728a).